The chain runs to 250 residues: Bcl-2-like protein 12 (250 aa).

Residues 24–46 (GEAAGSPVPTPPRSPAQEEPTDF) form a disordered region. S29 bears the Phosphoserine mark. Residue T33 is modified to Phosphothreonine. Phosphoserine is present on S37. R60 bears the Omega-N-methylarginine mark. S111, S158, S159, S161, and S189 each carry phosphoserine. The BH2 signature appears at 227–238 (WIQAHGGWEGIL).

Belongs to the Bcl-2 family. Expressed mainly in breast, thymus, prostate, fetal liver, colon, placenta, pancreas, small intestine, spinal cord, kidney, and bone marrow and to a lesser extent in many other tissues. Isoform 2 is primarily expressed in skeletal muscle.

This Homo sapiens (Human) protein is Bcl-2-like protein 12.